The primary structure comprises 149 residues: Calmodulin-3 (149 aa).

Alanine 2 is subject to N-acetylalanine. EF-hand domains are found at residues 8 to 43, 44 to 79, 81 to 116, and 117 to 149; these read DQIA…LGQN, PTEA…KMKD, DSEE…LGEK, and LTDE…MMAK. Residues aspartate 21, aspartate 23, aspartate 25, cysteine 27, glutamate 32, aspartate 57, aspartate 59, asparagine 61, threonine 63, glutamate 68, aspartate 94, aspartate 96, asparagine 98, and glutamate 105 each coordinate Ca(2+). N6,N6,N6-trimethyllysine is present on lysine 116. Aspartate 130, aspartate 132, aspartate 134, glutamine 136, and glutamate 141 together coordinate Ca(2+).

Belongs to the calmodulin family.

In terms of biological role, calmodulin mediates the control of a large number of enzymes, ion channels and other proteins by Ca(2+). Among the enzymes to be stimulated by the calmodulin-Ca(2+) complex are a number of protein kinases and phosphatases. The protein is Calmodulin-3 (CAM3) of Oryza sativa subsp. japonica (Rice).